The primary structure comprises 131 residues: Small ribosomal subunit protein uS8 (131 aa).

The protein belongs to the universal ribosomal protein uS8 family. Part of the 30S ribosomal subunit. Contacts proteins S5 and S12.

Its function is as follows. One of the primary rRNA binding proteins, it binds directly to 16S rRNA central domain where it helps coordinate assembly of the platform of the 30S subunit. In Wolbachia pipientis subsp. Culex pipiens (strain wPip), this protein is Small ribosomal subunit protein uS8.